The chain runs to 181 residues: MRITISGPPGSGTTSLARYLAGKHGLDLISAGEVFRQLAKEHGMDLADFGKFAENDPSVDRMIDARQKEIGEAAENIIIEGRLSGRMVGNADLRIWLSASLSCRARRIAGRDGMDEEGARAYTENRQRSEATRYRNYYGIEIDDLSPYDIVLSSETFGVDALGTIVDAAIACLARQQAADL.

Residue G7–S15 coordinates ATP.

It belongs to the cytidylate kinase family. Type 2 subfamily.

Its subcellular location is the cytoplasm. The enzyme catalyses CMP + ATP = CDP + ADP. It catalyses the reaction dCMP + ATP = dCDP + ADP. The polypeptide is Cytidylate kinase (Methanoculleus marisnigri (strain ATCC 35101 / DSM 1498 / JR1)).